The sequence spans 956 residues: Isoleucine--tRNA ligase (956 aa).

The 'HIGH' region signature appears at 60–70; sequence PYANGHIHVGH. Glutamate 583 provides a ligand contact to L-isoleucyl-5'-AMP. The short motif at 624 to 628 is the 'KMSKS' region element; sequence KMSKS. An ATP-binding site is contributed by lysine 627. The Zn(2+) site is built by cysteine 921, cysteine 924, cysteine 938, and cysteine 941.

This sequence belongs to the class-I aminoacyl-tRNA synthetase family. IleS type 1 subfamily. In terms of assembly, monomer. Zn(2+) is required as a cofactor.

The protein localises to the cytoplasm. The catalysed reaction is tRNA(Ile) + L-isoleucine + ATP = L-isoleucyl-tRNA(Ile) + AMP + diphosphate. Its function is as follows. Catalyzes the attachment of isoleucine to tRNA(Ile). As IleRS can inadvertently accommodate and process structurally similar amino acids such as valine, to avoid such errors it has two additional distinct tRNA(Ile)-dependent editing activities. One activity is designated as 'pretransfer' editing and involves the hydrolysis of activated Val-AMP. The other activity is designated 'posttransfer' editing and involves deacylation of mischarged Val-tRNA(Ile). The chain is Isoleucine--tRNA ligase from Aquifex aeolicus (strain VF5).